A 143-amino-acid chain; its full sequence is Transcriptional regulator MraZ (143 aa).

2 SpoVT-AbrB domains span residues 5–47 and 76–119; these read EYQH…PLNE and ATEC…SDER.

The protein belongs to the MraZ family. Forms oligomers.

The protein resides in the cytoplasm. It localises to the nucleoid. The protein is Transcriptional regulator MraZ of Enterococcus faecalis (strain ATCC 700802 / V583).